Reading from the N-terminus, the 304-residue chain is Bifunctional protein FolD 3 (304 aa).

Residues 172–174 (GRS), Ser197, and Ile238 each bind NADP(+).

It belongs to the tetrahydrofolate dehydrogenase/cyclohydrolase family. Homodimer.

The catalysed reaction is (6R)-5,10-methylene-5,6,7,8-tetrahydrofolate + NADP(+) = (6R)-5,10-methenyltetrahydrofolate + NADPH. The enzyme catalyses (6R)-5,10-methenyltetrahydrofolate + H2O = (6R)-10-formyltetrahydrofolate + H(+). It participates in one-carbon metabolism; tetrahydrofolate interconversion. Its function is as follows. Catalyzes the oxidation of 5,10-methylenetetrahydrofolate to 5,10-methenyltetrahydrofolate and then the hydrolysis of 5,10-methenyltetrahydrofolate to 10-formyltetrahydrofolate. In Rhizorhabdus wittichii (strain DSM 6014 / CCUG 31198 / JCM 15750 / NBRC 105917 / EY 4224 / RW1) (Sphingomonas wittichii), this protein is Bifunctional protein FolD 3.